Reading from the N-terminus, the 919-residue chain is Puromycin-sensitive aminopeptidase (919 aa).

Substrate-binding positions include Glu-180 and 316-320 (GAMEN). His-352 contributes to the Zn(2+) binding site. Glu-353 (proton acceptor) is an active-site residue. His-356 and Glu-375 together coordinate Zn(2+). 3'-nitrotyrosine is present on Tyr-464. A Nuclear localization signal motif is present at residues 726-730 (RRRFK).

The protein belongs to the peptidase M1 family. Monomer. Zn(2+) serves as cofactor. Detected in liver, epithelium of renal tubules, epithelium of small and large intestine, gastric epithelial cells, and alveoli of the lung (at protein level).

The protein localises to the cytoplasm. Its subcellular location is the cytosol. It localises to the nucleus. It carries out the reaction Release of an N-terminal amino acid, preferentially alanine, from a wide range of peptides, amides and arylamides.. With respect to regulation, strongly inhibited by bestatin, leuhistin, actinonin, amastatin, 1,10-phenanthroline, DFP, PCMBS, Zn(2+), Cd(2+), Co(2+), Cu(2+), Hg(2+), EDTA and puromycin. Not inhibited by PMSF, and only slightly inhibited by leupeptin and aprotinin. Activity is increased by Mg(2+) and Ca(2+). Aminopeptidase with broad substrate specificity for several peptides. Involved in proteolytic events essential for cell growth and viability. May act as regulator of neuropeptide activity. Plays a role in the antigen-processing pathway for MHC class I molecules. Involved in the N-terminal trimming of cytotoxic T-cell epitope precursors. Digests the poly-Q peptides found in many cellular proteins. Digests tau from normal brain more efficiently than tau from Alzheimer disease brain. The protein is Puromycin-sensitive aminopeptidase (NPEPPS) of Homo sapiens (Human).